The primary structure comprises 363 residues: Protein-arginine kinase (363 aa).

Residues 24-255 enclose the Phosphagen kinase C-terminal domain; sequence IVLSSRIRLA…QQLIAQERAA (232 aa). ATP is bound by residues 27–31, His-92, Arg-126, 177–181, and 208–213; these read SSRIR, RASVM, and RGTYGE. Positions 338–343 match the RDXXRA motif of the pArg binding pocket involved in allosteric regulation motif; sequence RDVRRA.

This sequence belongs to the ATP:guanido phosphotransferase family.

The enzyme catalyses L-arginyl-[protein] + ATP = N(omega)-phospho-L-arginyl-[protein] + ADP + H(+). With respect to regulation, appears to be allosterically activated by the binding of pArg-containing polypeptides to the pArg-binding pocket localized in the C-terminal domain of McsB. Functionally, catalyzes the specific phosphorylation of arginine residues in a large number of proteins. Is part of the bacterial stress response system. Protein arginine phosphorylation has a physiologically important role and is involved in the regulation of many critical cellular processes, such as protein homeostasis, motility, competence, and stringent and stress responses, by regulating gene expression and protein activity. The polypeptide is Protein-arginine kinase (Geobacillus thermodenitrificans (strain NG80-2)).